The chain runs to 1086 residues: Fused isobutyryl-CoA mutase (1086 aa).

Positions 10–140 (HVRFVTASSL…QGMINVMLEE (131 aa)) constitute a B12-binding domain. Histidine 23 serves as a coordination point for adenosylcob(III)alamin. The segment at 153–407 (LERLPSGDVQ…FVALVDTINK (255 aa)) is GTPase chaperone MeaI. Position 210–215 (210–215 (GAGKSS)) interacts with GTP. Serine 214, valine 238, aspartate 239, and aspartate 252 together coordinate Mg(2+). Arginine 255 is a binding site for GTP. The Mg(2+) site is built by glutamate 300 and threonine 301. Residue 347-350 (NKFE) participates in GTP binding. The tract at residues 408–570 (KAGTNWKTSL…YKENVPGSFP (163 aa)) is linker. Substrate is bound by residues phenylalanine 578, arginine 613, arginine 719, tyrosine 763, serine 812, arginine 847, and lysine 852. Residues glutamate 964 and asparagine 1085 each contribute to the GTP site.

It belongs to the IcmF family. Homodimer. Requires adenosylcob(III)alamin as cofactor. Mg(2+) is required as a cofactor.

It catalyses the reaction 2-methylpropanoyl-CoA = butanoyl-CoA. The enzyme catalyses 3-methylbutanoyl-CoA = 2,2-dimethylpropanoyl-CoA. It carries out the reaction GTP + H2O = GDP + phosphate + H(+). Functionally, catalyzes the reversible interconversion of isobutyryl-CoA and n-butyryl-CoA, and to a lesser extent, of pivalyl-CoA and isovaleryl-CoA, using radical chemistry. Also exhibits GTPase activity, associated with its G-protein domain (MeaI) that functions as a chaperone that assists cofactor delivery and proper holo-enzyme assembly. Also displays ATPase activity. Is not able to convert 3-hydroxybutyryl-CoA to 2-hydroxyisobutyryl-CoA. Does not exhibit methylmalonyl-CoA mutase (MCM) activity. This is Fused isobutyryl-CoA mutase from Geobacillus kaustophilus (strain HTA426).